Consider the following 341-residue polypeptide: Transcription factor JunD (341 aa).

The segment at 21 to 49 is disordered; the sequence is VAGAAGAPGGGGFAPPGRAFPGAPPTSSM. Positions 35–47 match the Menin-binding motif (MBM) motif; that stretch reads PPGRAFPGAPPTS. The MAP kinase docking motif; essential for its phosphorylation motif lies at 51–60; the sequence is KKDALTLSLA. The segment at 65-85 is disordered; that stretch reads AGLKPGSATAPSALRPDGAPD. S90 is subject to Phosphoserine. S100 is subject to Phosphoserine; by MAPK8. Position 117 is a phosphothreonine (T117). The disordered stretch occupies residues 155–176; it reads AATAATSGAPAPPAPADLAATP. 3 positions are modified to phosphoserine: S245, S249, and S253. The interval 262 to 289 is basic motif; sequence RIKAERKRLRNRIAASKCRKRKLERISR. The bZIP domain occupies 262–325; the sequence is RIKAERKRLR…AQLKQKVLSH (64 aa). Residues 290 to 318 are leucine-zipper; that stretch reads LEEKVKTLKSQNTELASTASLLREQVAQL.

Belongs to the bZIP family. Jun subfamily. Heterodimer; binds DNA as a heterodimer. Component of an AP-1 transcription factor complex composed of JUN-FOS heterodimers. As part of the AP-1 transcription factor complex, forms heterodimers with FOS proteins, thereby binding to the AP-1 consensus sequence and stimulating transcription. Forms heterodimers with FOSB; thereby binding to the AP-1 consensus sequence. Interacts (via MBM motif) with MEN1; this interaction represses transcriptional activation. Interacts with MAPK10; this interaction is inhibited in the presence of MEN1. Phosphorylated by MAP kinases MAPK8 and MAPK10; phosphorylation is inhibited in the presence of MEN1.

Its subcellular location is the nucleus. Functionally, transcription factor binding AP-1 sites. Heterodimerizes with proteins of the FOS family to form an AP-1 transcription factor complex, thereby enhancing their DNA binding activity to an AP-1 consensus sequence 3'-TGA[GC]TCA-5' and enhancing their transcriptional activity. In Rattus norvegicus (Rat), this protein is Transcription factor JunD (Jund).